The following is a 258-amino-acid chain: UPF0246 protein Pnuc_0753 (258 aa).

The protein belongs to the UPF0246 family.

The polypeptide is UPF0246 protein Pnuc_0753 (Polynucleobacter asymbioticus (strain DSM 18221 / CIP 109841 / QLW-P1DMWA-1) (Polynucleobacter necessarius subsp. asymbioticus)).